The chain runs to 825 residues: Quinic acid utilization activator (825 aa).

Polar residues predominate over residues 1-12 (MSSDTRQTSGGN). The tract at residues 1–45 (MSSDTRQTSGGNARSKRRLTDAVDEDGRPTATAEDPTSNPKRQRV) is disordered. Residues 18–28 (RLTDAVDEDGR) are compositionally biased toward basic and acidic residues. The zn(2)-C6 fungal-type DNA-binding region spans 49–76 (CDSCRSKKDKCDGAQPICSTCASLSRPC). Disordered regions lie at residues 160–186 (EQPE…SSVL), 204–224 (QSPL…TTRL), and 658–683 (GSQR…SLPG). Residues 165 to 174 (DQERSARGEI) are compositionally biased toward basic and acidic residues. Over residues 658–672 (GSQRRPRHATQQGTH) the composition is skewed to polar residues.

The protein resides in the nucleus. In terms of biological role, transcription activation of genes for enzymes and proteins of quinate metabolism by binding to a 16 base-pair sequence (consensus 5'-GGATAANNNNTTATCC-3') in front of each qut gene. The protein is Quinic acid utilization activator (qutA) of Emericella nidulans (strain FGSC A4 / ATCC 38163 / CBS 112.46 / NRRL 194 / M139) (Aspergillus nidulans).